Reading from the N-terminus, the 293-residue chain is Shikimate dehydrogenase (NADP(+)) (293 aa).

Shikimate is bound by residues 20 to 22 (SLT) and threonine 72. The Proton acceptor role is filled by lysine 76. Positions 97 and 112 each coordinate shikimate. Residues 136 to 140 (GAGGA) and isoleucine 230 each bind NADP(+). Shikimate is bound at residue tyrosine 232. Position 253 (glycine 253) interacts with NADP(+).

It belongs to the shikimate dehydrogenase family. In terms of assembly, homodimer.

It carries out the reaction shikimate + NADP(+) = 3-dehydroshikimate + NADPH + H(+). It functions in the pathway metabolic intermediate biosynthesis; chorismate biosynthesis; chorismate from D-erythrose 4-phosphate and phosphoenolpyruvate: step 4/7. Involved in the biosynthesis of the chorismate, which leads to the biosynthesis of aromatic amino acids. Catalyzes the reversible NADPH linked reduction of 3-dehydroshikimate (DHSA) to yield shikimate (SA). This Pseudarthrobacter chlorophenolicus (strain ATCC 700700 / DSM 12829 / CIP 107037 / JCM 12360 / KCTC 9906 / NCIMB 13794 / A6) (Arthrobacter chlorophenolicus) protein is Shikimate dehydrogenase (NADP(+)).